The primary structure comprises 118 residues: Large ribosomal subunit protein bL20c (118 aa).

It belongs to the bacterial ribosomal protein bL20 family.

Its subcellular location is the plastid. Its function is as follows. Binds directly to 23S ribosomal RNA and is necessary for the in vitro assembly process of the 50S ribosomal subunit. It is not involved in the protein synthesizing functions of that subunit. The sequence is that of Large ribosomal subunit protein bL20c from Aneura mirabilis (Parasitic liverwort).